The sequence spans 642 residues: 1-deoxy-D-xylulose-5-phosphate synthase (642 aa).

Residues histidine 79 and 120–122 (AHS) contribute to the thiamine diphosphate site. A Mg(2+)-binding site is contributed by aspartate 155. Residues 156–157 (GS), asparagine 184, tyrosine 293, and glutamate 375 each bind thiamine diphosphate. Residue asparagine 184 coordinates Mg(2+).

Belongs to the transketolase family. DXPS subfamily. In terms of assembly, homodimer. It depends on Mg(2+) as a cofactor. Requires thiamine diphosphate as cofactor.

It catalyses the reaction D-glyceraldehyde 3-phosphate + pyruvate + H(+) = 1-deoxy-D-xylulose 5-phosphate + CO2. It participates in metabolic intermediate biosynthesis; 1-deoxy-D-xylulose 5-phosphate biosynthesis; 1-deoxy-D-xylulose 5-phosphate from D-glyceraldehyde 3-phosphate and pyruvate: step 1/1. Functionally, catalyzes the acyloin condensation reaction between C atoms 2 and 3 of pyruvate and glyceraldehyde 3-phosphate to yield 1-deoxy-D-xylulose-5-phosphate (DXP). The protein is 1-deoxy-D-xylulose-5-phosphate synthase of Ruegeria pomeroyi (strain ATCC 700808 / DSM 15171 / DSS-3) (Silicibacter pomeroyi).